Reading from the N-terminus, the 443-residue chain is Probable glycine dehydrogenase (decarboxylating) subunit 1 (443 aa).

The protein belongs to the GcvP family. N-terminal subunit subfamily. The glycine cleavage system is composed of four proteins: P, T, L and H. In this organism, the P 'protein' is a heterodimer of two subunits.

The enzyme catalyses N(6)-[(R)-lipoyl]-L-lysyl-[glycine-cleavage complex H protein] + glycine + H(+) = N(6)-[(R)-S(8)-aminomethyldihydrolipoyl]-L-lysyl-[glycine-cleavage complex H protein] + CO2. Its function is as follows. The glycine cleavage system catalyzes the degradation of glycine. The P protein binds the alpha-amino group of glycine through its pyridoxal phosphate cofactor; CO(2) is released and the remaining methylamine moiety is then transferred to the lipoamide cofactor of the H protein. The polypeptide is Probable glycine dehydrogenase (decarboxylating) subunit 1 (Nitratidesulfovibrio vulgaris (strain DP4) (Desulfovibrio vulgaris)).